Reading from the N-terminus, the 481-residue chain is Protein nucleotidyltransferase YdiU (481 aa).

ATP is bound by residues Gly-87, Gly-89, Arg-90, Lys-110, Asp-122, Gly-123, Arg-173, and Arg-180. The active-site Proton acceptor is Asp-249. Asn-250 and Asp-259 together coordinate Mg(2+). ATP is bound at residue Asp-259.

The protein belongs to the SELO family. Mg(2+) is required as a cofactor. The cofactor is Mn(2+).

It catalyses the reaction L-seryl-[protein] + ATP = 3-O-(5'-adenylyl)-L-seryl-[protein] + diphosphate. The catalysed reaction is L-threonyl-[protein] + ATP = 3-O-(5'-adenylyl)-L-threonyl-[protein] + diphosphate. The enzyme catalyses L-tyrosyl-[protein] + ATP = O-(5'-adenylyl)-L-tyrosyl-[protein] + diphosphate. It carries out the reaction L-histidyl-[protein] + UTP = N(tele)-(5'-uridylyl)-L-histidyl-[protein] + diphosphate. It catalyses the reaction L-seryl-[protein] + UTP = O-(5'-uridylyl)-L-seryl-[protein] + diphosphate. The catalysed reaction is L-tyrosyl-[protein] + UTP = O-(5'-uridylyl)-L-tyrosyl-[protein] + diphosphate. Its function is as follows. Nucleotidyltransferase involved in the post-translational modification of proteins. It can catalyze the addition of adenosine monophosphate (AMP) or uridine monophosphate (UMP) to a protein, resulting in modifications known as AMPylation and UMPylation. The protein is Protein nucleotidyltransferase YdiU of Mycobacterium sp. (strain KMS).